Reading from the N-terminus, the 480-residue chain is Ribosomal protein uS12 methylthiotransferase RimO (480 aa).

In terms of domain architecture, MTTase N-terminal spans 37 to 147; sequence NRIGFVSLGC…VLKHVHKYVP (111 aa). [4Fe-4S] cluster contacts are provided by C46, C82, C111, C179, C183, and C186. A Radical SAM core domain is found at 165-402; it reads LTPKHYAYLK…MEVQAEISAE (238 aa). The TRAM domain occupies 405–471; sequence ARFVGRTMDI…EHDLWAELVD (67 aa).

The protein belongs to the methylthiotransferase family. RimO subfamily. It depends on [4Fe-4S] cluster as a cofactor.

The protein resides in the cytoplasm. It catalyses the reaction L-aspartate(89)-[ribosomal protein uS12]-hydrogen + (sulfur carrier)-SH + AH2 + 2 S-adenosyl-L-methionine = 3-methylsulfanyl-L-aspartate(89)-[ribosomal protein uS12]-hydrogen + (sulfur carrier)-H + 5'-deoxyadenosine + L-methionine + A + S-adenosyl-L-homocysteine + 2 H(+). Catalyzes the methylthiolation of an aspartic acid residue of ribosomal protein uS12. The protein is Ribosomal protein uS12 methylthiotransferase RimO of Shewanella sp. (strain ANA-3).